The sequence spans 848 residues: Coiled-coil domain-containing protein 110 (848 aa).

The interval 41–62 (SEGVKESGGNEPEYGCASEPEN) is disordered. Residues 442 to 794 (LQNYLKESLQ…LSDKVSSQNN (353 aa)) are a coiled coil. Phosphoserine is present on serine 620.

The protein resides in the nucleus. The sequence is that of Coiled-coil domain-containing protein 110 (Ccdc110) from Mus musculus (Mouse).